A 200-amino-acid chain; its full sequence is Ras-related protein Rab-10 (200 aa).

The GTP site is built by Ser-18, Gly-19, Val-20, Gly-21, Lys-22, Thr-23, Cys-24, Asn-35, Thr-36, Ser-40, and Thr-41. Mg(2+) is bound at residue Thr-23. 2 consecutive short sequence motifs (switch) follow at residues 32 to 46 (DAFN…EIDF) and 64 to 81 (DTAG…YYRG). Residues Thr-41 and Asp-64 each coordinate Mg(2+). Gly-67 lines the GTP pocket. Residue Thr-73 is modified to Phosphothreonine. Lys-102 is subject to N6-acetyllysine. Lys-102 participates in a covalent cross-link: Glycyl lysine isopeptide (Lys-Gly) (interchain with G-Cter in ubiquitin). GTP-binding residues include Asn-122, Lys-123, Asp-125, and Met-126. A Glycyl lysine isopeptide (Lys-Gly) (interchain with G-Cter in ubiquitin) cross-link involves residue Lys-136. Residues Ser-152, Ala-153, and Lys-154 each coordinate GTP. Residue Lys-154 forms a Glycyl lysine isopeptide (Lys-Gly) (interchain with G-Cter in ubiquitin) linkage. 2 S-geranylgeranyl cysteine lipidation sites follow: Cys-199 and Cys-200.

Belongs to the small GTPase superfamily. Rab family. Interacts with MYO5A; mediates the transport to the plasma membrane of SLC2A4/GLUT4 storage vesicles. Interacts with GDI1 and with GDI2; negatively regulates RAB10 association with membranes and activation. Interacts (GDP-bound form) with LLGL1; the interaction is direct and promotes RAB10 association with membranes and activation through competition with the Rab inhibitor GDI1. Interacts with EXOC4; probably associates with the exocyst. Interacts (GTP-bound form) with MICALCL, MICAL1, MICAL3, EHBP1 and EHBP1L1; at least in case of MICAL1 two molecules of RAB10 can bind to one molecule of MICAL1. Interacts with TBC1D13. Interacts with SEC16A. Interacts with CHM. Interacts with LRRK2; interaction facilitates phosphorylation of Thr-73. Interacts with RILPL1 and RILPL2 when phosphorylated on Thr-73. Interacts with TBC1D21. Interacts with MARCKS. It depends on Mg(2+) as a cofactor. Phosphorylation of Thr-73 in the switch II region by LRRK2 prevents the association of RAB regulatory proteins, including CHM and RAB GDP dissociation inhibitors GDI1 and GDI2. Phosphorylation of Thr-73 by LRRK2 is stimulated by RAB29 and RAB32. Phosphorylation by LRRK2 is required for localization to stressed lysosomes. As to expression, highest levels in neural and muscle tissues.

The protein localises to the cytoplasmic vesicle membrane. The protein resides in the golgi apparatus. It localises to the trans-Golgi network membrane. It is found in the endosome membrane. Its subcellular location is the recycling endosome membrane. The protein localises to the cytoplasmic vesicle. The protein resides in the phagosome membrane. It localises to the cell projection. It is found in the cilium. Its subcellular location is the endoplasmic reticulum membrane. The protein localises to the cytoplasm. The protein resides in the perinuclear region. It localises to the lysosome. It catalyses the reaction GTP + H2O = GDP + phosphate + H(+). With respect to regulation, regulated by guanine nucleotide exchange factors (GEFs) DENND4C and RABIF which promote the exchange of bound GDP for free GTP. Regulated by GTPase activating proteins (GAPs) including TBC1D21 which increase the GTP hydrolysis activity. Inhibited by GDP dissociation inhibitors GDI1 and GDI2 which prevent Rab-GDP dissociation. Functionally, the small GTPases Rab are key regulators of intracellular membrane trafficking, from the formation of transport vesicles to their fusion with membranes. Rabs cycle between an inactive GDP-bound form and an active GTP-bound form that is able to recruit to membranes different set of downstream effectors directly responsible for vesicle formation, movement, tethering and fusion. That Rab is mainly involved in the biosynthetic transport of proteins from the Golgi to the plasma membrane. Regulates, for instance, SLC2A4/GLUT4 glucose transporter-enriched vesicles delivery to the plasma membrane. In parallel, it regulates the transport of TLR4, a toll-like receptor to the plasma membrane and therefore may be important for innate immune response. Also plays a specific role in asymmetric protein transport to the plasma membrane. In neurons, it is involved in axonogenesis through regulation of vesicular membrane trafficking toward the axonal plasma membrane. In epithelial cells, it regulates transport from the Golgi to the basolateral membrane. May play a role in the basolateral recycling pathway and in phagosome maturation. May play a role in endoplasmic reticulum dynamics and morphology controlling tubulation along microtubules and tubules fusion. Together with LRRK2, RAB8A, and RILPL1, it regulates ciliogenesis. When phosphorylated by LRRK2 on Thr-73, it binds RILPL1 and inhibits ciliogenesis. Participates in the export of a subset of neosynthesized proteins through a Rab8-Rab10-Rab11-dependent endososomal export route. Targeted to and stabilized on stressed lysosomes through LRRK2 phosphorylation where it promotes the extracellular release of lysosomal content through EHBP1 and EHNP1L1 effector proteins. The sequence is that of Ras-related protein Rab-10 from Rattus norvegicus (Rat).